The sequence spans 490 residues: Protein U94 (490 aa).

The 210-residue stretch at Met-1–Lys-210 folds into the PV NS1-Nuc domain. The region spanning Asp-312 to Lys-463 is the SF3 helicase domain. Gly-338–Ser-345 is an ATP binding site.

It is found in the host nucleus. This Human herpesvirus 6B (HHV-6 variant B) protein is Protein U94 (U94).